The following is a 179-amino-acid chain: Putative manganese efflux pump MntP (179 aa).

Transmembrane regions (helical) follow at residues 4-24, 39-59, 69-89, 102-122, 128-148, and 159-179; these read VLILAFALSMDAFAVSIGLGI, LFFGIFQALMPFLGFLGGIGL, IVAFILLLAIGGKMIYEAFNE, ILLTLAIATSLDAMAAGYSLH, IYLSLFVIGFTTFIISYIGVY, and SKAEILGGVVLILIGLKILLF.

The protein belongs to the MntP (TC 9.B.29) family.

It is found in the cell inner membrane. Functionally, probably functions as a manganese efflux pump. This is Putative manganese efflux pump MntP from Aliarcobacter butzleri (strain RM4018) (Arcobacter butzleri).